Reading from the N-terminus, the 113-residue chain is MASGQEKRSELDARAKQGETVVPGGTGGKSLEAQEHLAEGRSKGGHTRKEQLGTEGYQEIGTKGGETRREQMGKEGYEQMGRMGGLATKDKSGAERAEEEGIDIDQSKFRTKS.

Composition is skewed to basic and acidic residues over residues 1–17, 32–52, and 65–77; these read MASG…RAKQ, EAQE…KEQL, and GETR…KEGY. The interval 1 to 113 is disordered; sequence MASGQEKRSE…IDQSKFRTKS (113 aa).

It belongs to the small hydrophilic plant seed protein family. Expressed in embryogenic cells, somatic embryos and seeds at the later stages of development. Not detected in leaves.

The protein is Carrot ABA-induced in somatic embryos 3 of Daucus carota (Wild carrot).